Here is a 636-residue protein sequence, read N- to C-terminus: 1-deoxy-D-xylulose-5-phosphate synthase (636 aa).

Thiamine diphosphate is bound by residues histidine 72 and 113-115; that span reads GHA. Position 144 (aspartate 144) interacts with Mg(2+). Residues 145–146, asparagine 174, tyrosine 287, and glutamate 370 contribute to the thiamine diphosphate site; that span reads GA. Asparagine 174 is a Mg(2+) binding site.

This sequence belongs to the transketolase family. DXPS subfamily. As to quaternary structure, homodimer. It depends on Mg(2+) as a cofactor. Thiamine diphosphate is required as a cofactor.

It carries out the reaction D-glyceraldehyde 3-phosphate + pyruvate + H(+) = 1-deoxy-D-xylulose 5-phosphate + CO2. The protein operates within metabolic intermediate biosynthesis; 1-deoxy-D-xylulose 5-phosphate biosynthesis; 1-deoxy-D-xylulose 5-phosphate from D-glyceraldehyde 3-phosphate and pyruvate: step 1/1. Catalyzes the acyloin condensation reaction between C atoms 2 and 3 of pyruvate and glyceraldehyde 3-phosphate to yield 1-deoxy-D-xylulose-5-phosphate (DXP). The protein is 1-deoxy-D-xylulose-5-phosphate synthase of Microcystis aeruginosa (strain NIES-843 / IAM M-2473).